The following is a 329-amino-acid chain: Formimidoylglutamase (329 aa).

Mn(2+)-binding residues include His133, Asp159, His161, Asp163, Asp253, and Asp255.

This sequence belongs to the arginase family. The cofactor is Mn(2+).

The enzyme catalyses N-formimidoyl-L-glutamate + H2O = formamide + L-glutamate. It participates in amino-acid degradation; L-histidine degradation into L-glutamate; L-glutamate from N-formimidoyl-L-glutamate (hydrolase route): step 1/1. Functionally, catalyzes the conversion of N-formimidoyl-L-glutamate to L-glutamate and formamide. The chain is Formimidoylglutamase from Streptococcus gordonii (strain Challis / ATCC 35105 / BCRC 15272 / CH1 / DL1 / V288).